A 161-amino-acid chain; its full sequence is Small ribosomal subunit protein uS9 (161 aa).

Belongs to the universal ribosomal protein uS9 family.

The protein is Small ribosomal subunit protein uS9 of Bartonella henselae (strain ATCC 49882 / DSM 28221 / CCUG 30454 / Houston 1) (Rochalimaea henselae).